We begin with the raw amino-acid sequence, 418 residues long: Tektin-1 (418 aa).

4 coiled-coil regions span residues 20–107 (NKSQ…SYKE), 134–177 (QELQ…DLRD), 266–308 (NGLK…QQEG), and 332–383 (IAQY…ENTI).

The protein belongs to the tektin family. As to quaternary structure, microtubule inner protein component of sperm flagellar doublet microtubules. Post-translationally, ubiquitinated, leading to its degradation. Deubiquitinated by USP16, promoting its stability.

The protein resides in the cytoplasm. It is found in the cytoskeleton. The protein localises to the cilium axoneme. Its subcellular location is the flagellum axoneme. Microtubule inner protein (MIP) part of the dynein-decorated doublet microtubules (DMTs) in cilia and flagellar axoneme. Forms filamentous polymers in the walls of ciliary and flagellar microtubules. This chain is Tektin-1 (Tekt1), found in Mus musculus (Mouse).